The following is a 125-amino-acid chain: uncharacterized protein (125 aa).

Positions 1–33 are enriched in polar residues; the sequence is MLPHQNSSYTRQGTNDAQANDMRSPSQLPTSVN. 2 disordered regions span residues 1 to 35 and 44 to 63; these read MLPH…VNIE and SEKL…KKHT. Basic residues predominate over residues 53–63; sequence NRSRSGIKKHT.

This is an uncharacterized protein from Schizosaccharomyces pombe (strain 972 / ATCC 24843) (Fission yeast).